The chain runs to 402 residues: Zinc finger protein CONSTANS-LIKE 14 (402 aa).

Zn(2+)-binding residues include Cys12, Cys15, Cys35, His40, Cys55, Cys58, Cys78, and His83. The segment at 12–54 adopts a B box-type 1; atypical zinc-finger fold; that stretch reads CEFCGERTAVLFCRADTAKLCLPCDQHVHSANLLSRKHVRSQI. The B box-type 2; atypical zinc finger occupies 55–97; sequence CDNCSKEPVSVRCFTDNLVLCQECDWDVHGSCSSSATHERSAV. The disordered stretch occupies residues 287-322; that stretch reads SYQQEDSVHSTSTKGQETSKSNNIPAAIHSHKSSND. Residues 295–310 are compositionally biased toward polar residues; it reads HSTSTKGQETSKSNNI. A coiled-coil region spans residues 345–372; that stretch reads VTNADLEQMAQNRDNAMQRYKEKKKTRR. Residues 357–399 form the CCT domain; the sequence is RDNAMQRYKEKKKTRRYDKTIRYETRKARAETRLRVKGRFVKA.

Belongs to the CONSTANS family.

The protein localises to the nucleus. This Arabidopsis thaliana (Mouse-ear cress) protein is Zinc finger protein CONSTANS-LIKE 14 (COL14).